Reading from the N-terminus, the 245-residue chain is MILFPAIDLKNGQCVRLEQGDMARATVFNLDPTAQAKSFAAQGFQYLHVVDLDGAFAGKPMNAQAVESMLKVVSMPVQLGGGIRDLATVEAWLSKGIARVIIGTAAVRDPALVKQAAKSFPGRVAVGLDARDGKVAVEGWAESSQVTALEIAQRFEDAGVAAIIFTDIARDGLLKGINWDATIALAEAISIPVIASGGLASIEDVKAMLSPRAHKLEGAIAGRALYDGRLDPAEALALIGAARAA.

D8 acts as the Proton acceptor in catalysis. The Proton donor role is filled by D129.

The protein belongs to the HisA/HisF family.

The protein localises to the cytoplasm. It carries out the reaction 1-(5-phospho-beta-D-ribosyl)-5-[(5-phospho-beta-D-ribosylamino)methylideneamino]imidazole-4-carboxamide = 5-[(5-phospho-1-deoxy-D-ribulos-1-ylimino)methylamino]-1-(5-phospho-beta-D-ribosyl)imidazole-4-carboxamide. It participates in amino-acid biosynthesis; L-histidine biosynthesis; L-histidine from 5-phospho-alpha-D-ribose 1-diphosphate: step 4/9. The sequence is that of 1-(5-phosphoribosyl)-5-[(5-phosphoribosylamino)methylideneamino] imidazole-4-carboxamide isomerase from Rhodopseudomonas palustris (strain HaA2).